Here is a 459-residue protein sequence, read N- to C-terminus: ATP-dependent RNA helicase me31b (459 aa).

Residues 1–267 (MMTEKLNSGH…EINLMEELTL (267 aa)) form a recA-like domain 1 region. 2 positions are modified to phosphoserine: S8 and S29. A Q motif motif is present at residues 58-86 (NEFEEFCLKRELLMGIFEKGWERPSPIQE). The Helicase ATP-binding domain occupies 89–259 (IPIALSGKDV…EKHLREPYEI (171 aa)). 102–109 (AKNGTGKT) is a binding site for ATP. The DEAD box signature appears at 207-210 (DEAD). The interval 264–431 (ELTLKGVTQY…PKVIDPALYV (168 aa)) is gyf binding. The region spanning 269–429 (GVTQYYAFVQ…PIPKVIDPAL (161 aa)) is the Helicase C-terminal domain. The recA-like domain 2 stretch occupies residues 432 to 459 (ANVGASVGDTCNNSDLNNSANEEGNVSK). S450 bears the Phosphoserine mark.

The protein belongs to the DEAD box helicase family. DDX6/DHH1 subfamily. Conserved component of different types of multiprotein ribonucleoprotein complexes (RNPs) that form distinct germ granules (P-body, nuage, sponge body or polar granules) and P-body-like neuronal RNPs. Consequently it interacts with a wide variety of proteins, some of which appear to be common interactive partners in almost all RNPs types i.e. cup and tral, whereas other interactions are specific to a germ granule/RNP. Core functional components in me31B-containing RNPs include RNA regulatory proteins (such as translational repressor, RNA-decapping and exonuclease proteins), RNA localization proteins and additional proteins depending on the biological context of the RNPs. In the P-body RNPs, interacts with at least the translation repressor proteins tral, cup and Edc3, and the mRNA localization factor yps. Interaction with tral or Edc3 is required for translation repression and possibly RNA decapping; binding to tral and Edc3 is mutually exclusive. In the nuage and germ plasm polar granule RNPs, interacts with at least tral, cup, and additional proteins required for assembly and function of the germ granules such as tud, vas and aub. Interacts (when dimethylated on Arg residues) with tud; interaction is RNA-independent. Component of the osk RNP complex, which is composed of at least me31B, exu, yps, aret/bruno, cup, and the mRNA of osk. Component of the nanos RNP complex, which is composed of at least smg, cup, tral, me31B, the CCR4-NOT complex members Rga/NOT2 and Caf1-55, and the mRNA of nanos (nos). Interacts with tral and piRNA pathway components papi and AGO3; promotes interaction between nuage RNPs and the piRNA-mediated transposon silencing. Forms a RNP containing at least me31B, eIF4E1, cup, tral and pAbp; this interaction is required for the translational silencing of maternal mRNAs during the maternal-to-zygotic transition. In the sponge body, forms a RNP containing at least me31B, exu, yps and the mRNA of osk; interactions with exu and yps are RNA dependent. Component of a neuronal RNP, at least composed of me31B, tral and Fmr1. Component of the Atx2-Not1 repressor complex, composed of at least me31B, Atx2, tyf and pAbp. Interacts (via the C-terminus) with Atx2, tyf, pAbp and Lsm12a. Interacts (via RecA-like domain 2) with 4EHP-GYF2 complex member Gyf (via the me31B binding motif). Interacts with 4E-T, Edc3 and Patr-1. In terms of processing, symmetrically dimethylated on arginine residues. In terms of tissue distribution, ubiquitously expressed throughout the brain (at protein level). Expressed in the olfactory system including the antennal lobes, projection neurons, local interneurons, mushroom-body Kenyon cells and glial cells (at protein level).

The protein localises to the cytoplasm. It is found in the cytoplasmic ribonucleoprotein granule. Its subcellular location is the P-body. The protein resides in the endoplasmic reticulum. It localises to the cell projection. The protein localises to the dendrite. The catalysed reaction is ATP + H2O = ADP + phosphate + H(+). ATP-dependent RNA helicase which is a core component of a variety of ribonucleoprotein complexes (RNPs) that play critical roles in translational repression and mRNA decapping during embryogenesis, oogenesis, neurogenesis and neurotransmission. Recruits core components and translational repressors to some RNP complexes, and mediates RNP aggregation into processing granules such as P-bodies. As part of a RNP complex containing tral, eIF4E1, cup, and pAbp, involved in RNP-mediated translational repression of maternal mRNAs during oogenesis and embryogenesis. As part of a RNP complex containing tral and the RNA localization factors exu and yps, mediates translational silencing of mRNAs such as osk/oskar and bcd/bicoid during their transport to the oocyte in order to prevent their translation until they reach their positional destinations. In neurons and possibly imaginal disks, involved in miRNA-mediated translational repression, possibly in association with components of the piRNA transposon silencing pathway. Involved in RNA localization and protein trafficking in the oocyte. As part of an ER-associated RNP containing tral, cup and yps, required for tral-dependent ER exit site formation and consequently efficient trafficking of proteins such as grk and yl through the secretory pathway. Component of neuron RNPs that mediate transport and translation of neuronal RNAs, including translation repression of synaptic transcripts in preparation for their dendritic targeting. As part of the Atx2-Not1 repressor complex promotes Not1-dependent post-transcriptional gene silencing in adult circadian pacemaker neurons in order to sustain high-amplitude circadian rhythms and Pdf cycling in a per-independent manner. Promotes the interaction between Atx2 and Not1 within the Atx2-Not1 RNP complex. Recruited to the 4EHP-GYF2 complex by Gyf, where it plays a role in 4EHP-GYF2 mediated translational repression and mRNA decay. The chain is ATP-dependent RNA helicase me31b (me31B) from Drosophila melanogaster (Fruit fly).